A 425-amino-acid polypeptide reads, in one-letter code: MSRVNKLHQWKERLRDRARTVSFGRFLWRRFLDDRLFQAAASLAYTTVFALVPLAIVVFGVLSAFPAFNEWKDALTDFIFNNFVPGAARSVQNYLNRSLEDLGKFTVAGMVALVASLLITLHSIEQTFNSIWRVAAARPKVTRFLIYWTVLTLGTMLAAASMAMAAYVFALPLFRTTEGQWLAEFAWRLAPMAVEFVCIVLIYRVVPQHVVRLRHALPGALLAVILMEIVKWGFGFYLGNFQTYQRIYGALSALPILLLWIYLSWVSVLLGASLASSMSAFRYQPEAMRLPPGFEIYGLLRLLGRFRQARVHGDGLDEDRILALEPMLTDTLMQELLCELKRIRLLRRDERGQWLLARDLDVVPLAELYENCQLRVPIEDRPLPCRDDAYGQAAAAALEQLRQPLRSVLAQPVGDLYTHLPGDPP.

The next 6 membrane-spanning stretches (helical) occupy residues 48–68, 105–125, 154–174, 182–202, 216–236, and 250–270; these read VFAL…FPAF, FTVA…HSIE, GTML…LPLF, LAEF…IVLI, ALPG…GFGF, and ALSA…SVLL.

Belongs to the UPF0761 family.

It localises to the cell inner membrane. The sequence is that of UPF0761 membrane protein XCV0968 from Xanthomonas euvesicatoria pv. vesicatoria (strain 85-10) (Xanthomonas campestris pv. vesicatoria).